The following is a 1089-amino-acid chain: PALM2-AKAP2 fusion protein (1089 aa).

Positions 70-107 (SEEDEFKVKQLEDNIQRLEQEIQALESEESQISAKEQI) form a coiled coil. Disordered stretches follow at residues 165–194 (SEDA…SPDH), 210–231 (PGVT…PSHN), and 289–362 (PAHS…SRDG). Over residues 173–183 (SKQDNCGDSRL) the composition is skewed to basic and acidic residues. Phosphoserine is present on residues arginine 315 and serine 318. Residues 317 to 328 (PSDRMAEGERAN) are compositionally biased toward basic and acidic residues. Polar residues predominate over residues 329 to 347 (GHSTDQPQDLLGNSLQAPA). At serine 348 the chain carries Phosphoserine. Over residues 348–357 (SPSSSTSSHC) the composition is skewed to low complexity. Residue lysine 370 forms a Glycyl lysine isopeptide (Lys-Gly) (interchain with G-Cter in SUMO1); alternate linkage. Lysine 370 participates in a covalent cross-link: Glycyl lysine isopeptide (Lys-Gly) (interchain with G-Cter in SUMO2); alternate. The tract at residues 429–517 (KNPGIAAKWW…LSTSQPCTAP (89 aa)) is disordered. A compositionally biased stretch (basic and acidic residues) spans 455-470 (LESHRKYKERKEKRAQ). Low complexity predominate over residues 471 to 508 (QEQLQLQQQQQQQLQQQQLQQQQLQQQQLQQQLQQQQL). Position 553 is a phosphoserine (serine 553). Residues 592 to 644 (TVGGTLEDGGTQAAKEQKAPCVSESQSAGAGPANAATQGKEGPYSEPSKRGPL) are disordered. Serine 678, serine 682, and serine 734 each carry phosphoserine. Residues 712 to 749 (FSMDNISDSGASNETPSALQENSLADFSLPQTPQTDNP) show a composition bias toward polar residues. 3 disordered regions span residues 712–783 (FSMD…DPLE), 800–899 (EQVD…YFSK), and 915–934 (TQES…KQRT). The residue at position 743 (threonine 743) is a Phosphothreonine. The tract at residues 782–795 (LEYQAGLLVQNAIQ) is PKA-RII subunit binding domain. The segment covering 801 to 814 (QVDKAEAHTSKEGS) has biased composition (basic and acidic residues). A Phosphoserine modification is found at serine 847. Residues 850 to 871 (QEKRDILPKNLPAEDRALREKG) are compositionally biased toward basic and acidic residues. A coiled-coil region spans residues 928 to 958 (RSRKQRTLSMIEEEIRAAQEREEELKRQRQV). Phosphoserine occurs at positions 936, 964, 995, and 1002. Residues 946-1021 (QEREEELKRQ…AAGTQRPKNL (76 aa)) are disordered.

In terms of tissue distribution, highly expressed in lung and weakly in thymus and cerebellum. Little or no expression in liver, heart and cerebral cortex. All isoforms are expressed in lung, but KL2A and KL2B isoforms are the principal isoforms in cerebellum.

It localises to the apical cell membrane. In terms of biological role, binds to regulatory subunit (RII) of protein kinase A. May be involved in establishing polarity in signaling systems or in integrating PKA-RII isoforms with downstream effectors to capture, amplify and focus diffuse, trans-cellular signals carried by cAMP. Binds tp and modulates the structure of the actin cytoskeleton. The sequence is that of PALM2-AKAP2 fusion protein from Mus musculus (Mouse).